The following is a 407-amino-acid chain: Melanoma-associated antigen B6B (407 aa).

Residues 1-16 are compositionally biased toward basic residues; it reads MPRGQKSKLRARGKRR. The disordered stretch occupies residues 1-185; sequence MPRGQKSKLR…ESLSSSKRAA (185 aa). Polar residues-rich tracts occupy residues 56–68 and 94–109; these read SGSS…QGAS and PSTS…SQGA. The span at 123–132 shows a compositional bias: basic and acidic residues; it reads KSDEAAKGQN. Residues 133-155 show a composition bias toward polar residues; sequence EKSPSTSRDASVPQESQGASPTG. Positions 195 to 394 constitute an MAGE domain; it reads IKRKANKMVQ…GLYPHLYEDA (200 aa).

This is Melanoma-associated antigen B6B from Homo sapiens (Human).